Here is a 335-residue protein sequence, read N- to C-terminus: Teichoic acids export ATP-binding protein TagH (335 aa).

Residues 26–246 form the ABC transporter domain; sequence IKGLFMPKSQ…YDEFVKWFNK (221 aa). 60–67 contacts ATP; the sequence is GINGSGKS.

This sequence belongs to the ABC transporter superfamily. Teichoic acids exporter (TC 3.A.1.104.1) family. The complex is composed of two ATP-binding proteins (TagH) and two transmembrane proteins (TagG).

It localises to the cell membrane. The enzyme catalyses ATP + H2O + teichoic acidSide 1 = ADP + phosphate + teichoic acidSide 2.. In terms of biological role, part of the ABC transporter complex TagGH involved in teichoic acids export. Responsible for energy coupling to the transport system. The sequence is that of Teichoic acids export ATP-binding protein TagH from Listeria monocytogenes serotype 4b (strain F2365).